The chain runs to 693 residues: Polyribonucleotide nucleotidyltransferase (693 aa).

2 residues coordinate Mg(2+): D489 and D495. The 60-residue stretch at 556 to 615 folds into the KH domain; sequence PQIHVMNINPAKIKDVVGRGGATVKGIVEKTGAQIDTSDSGEVKVFAKDKKSMDMAVAMI. The S1 motif domain maps to 625–693; sequence GQVYKGKIVK…GRVKLSLVAR (69 aa).

Belongs to the polyribonucleotide nucleotidyltransferase family. As to quaternary structure, component of the RNA degradosome, which is a multiprotein complex involved in RNA processing and mRNA degradation. Mg(2+) serves as cofactor.

The protein localises to the cytoplasm. The catalysed reaction is RNA(n+1) + phosphate = RNA(n) + a ribonucleoside 5'-diphosphate. In terms of biological role, involved in mRNA degradation. Catalyzes the phosphorolysis of single-stranded polyribonucleotides processively in the 3'- to 5'-direction. This chain is Polyribonucleotide nucleotidyltransferase, found in Francisella tularensis subsp. holarctica (strain FTNF002-00 / FTA).